The following is a 285-amino-acid chain: MASLRDIKQRINSTKKTKQITKAMEMVSAAKLNRSQEKAQSFLPYTDKIREVVASIAASDTDVSHPMLEERPVKKTGYIVITSDRGLAGAYNSNLIRGLLYTINKRHKSKDEYGIFAIGRTGRDLLKKRQLPIISEMTGLSDQPTFNDIKDIAKQTVDMFADEVFDELYIWYNHFVSPIKQDVTEKKVLPLTDLSDTKVSTTYEYEPNEQVILEALLPQYAESLVYGALLDAKASEFAARMTAMSAATDNATNLIDELTLSYNRARQAAITQEITEIVGGAAALE.

It belongs to the ATPase gamma chain family. As to quaternary structure, F-type ATPases have 2 components, CF(1) - the catalytic core - and CF(0) - the membrane proton channel. CF(1) has five subunits: alpha(3), beta(3), gamma(1), delta(1), epsilon(1). CF(0) has three main subunits: a, b and c.

It is found in the cell membrane. In terms of biological role, produces ATP from ADP in the presence of a proton gradient across the membrane. The gamma chain is believed to be important in regulating ATPase activity and the flow of protons through the CF(0) complex. The sequence is that of ATP synthase gamma chain from Halalkalibacterium halodurans (strain ATCC BAA-125 / DSM 18197 / FERM 7344 / JCM 9153 / C-125) (Bacillus halodurans).